The chain runs to 279 residues: Acyl-[acyl-carrier-protein]--UDP-N-acetylglucosamine O-acyltransferase (279 aa).

The tract at residues 260-279 (AAKEAFQEESVDKEGALVES) is disordered.

It belongs to the transferase hexapeptide repeat family. LpxA subfamily. Homotrimer.

It is found in the cytoplasm. It catalyses the reaction a (3R)-hydroxyacyl-[ACP] + UDP-N-acetyl-alpha-D-glucosamine = a UDP-3-O-[(3R)-3-hydroxyacyl]-N-acetyl-alpha-D-glucosamine + holo-[ACP]. Its pathway is glycolipid biosynthesis; lipid IV(A) biosynthesis; lipid IV(A) from (3R)-3-hydroxytetradecanoyl-[acyl-carrier-protein] and UDP-N-acetyl-alpha-D-glucosamine: step 1/6. Its function is as follows. Involved in the biosynthesis of lipid A, a phosphorylated glycolipid that anchors the lipopolysaccharide to the outer membrane of the cell. The chain is Acyl-[acyl-carrier-protein]--UDP-N-acetylglucosamine O-acyltransferase from Chlamydia abortus (strain DSM 27085 / S26/3) (Chlamydophila abortus).